The chain runs to 272 residues: Serine/arginine-rich splicing factor 5 (272 aa).

Residues 4–74 (CRVFIGRLNP…ERVTIEHARA (71 aa)) form the RRM 1 domain. The tract at residues 73 to 105 (RARSRGGRGRGRYSDRFSSRRPRNDRRNAPPVR) is disordered. Basic residues predominate over residues 74–83 (ARSRGGRGRG). Ser-86 is modified (phosphoserine). Residues 108-181 (NRLIVENLSS…RKIKLIEGSK (74 aa)) enclose the RRM 2 domain. An N6-acetyllysine modification is found at Lys-167. A disordered region spans residues 174-272 (IKLIEGSKRH…SRSRSVDSGN (99 aa)). Positions 182-229 (RHSRSRSRSRSRTRSSSRSRSRSRSRSRKSYSRSRSRSRSRSRSKSRS) are enriched in basic residues. A phosphoserine mark is found at Ser-227, Ser-229, Ser-233, Ser-250, and Ser-253. Low complexity predominate over residues 242–254 (RGSSSRSKSPASV).

It belongs to the splicing factor SR family. In terms of assembly, interacts (via RS domain) with PHF5A (via N-terminus). Found in a pre-mRNA splicing complex with SRSF4/SFRS4, SRSF5/SFRS5, SNRNP70, SNRPA1, SRRM1 and SRRM2. Post-translationally, extensively phosphorylated on serine residues in the RS domain.

Its subcellular location is the nucleus. Its function is as follows. Plays a role in constitutive splicing and can modulate the selection of alternative splice sites. This Homo sapiens (Human) protein is Serine/arginine-rich splicing factor 5 (SRSF5).